We begin with the raw amino-acid sequence, 410 residues long: Divergent protein kinase domain 1C (410 aa).

At 1 to 19 the chain is on the cytoplasmic side; sequence MARAAGERGRAARCGRWRR. The May mediate ER retention motif lies at 18-19; the sequence is RR. A helical transmembrane segment spans residues 20-40; the sequence is GALLAFAAWTAGWVLAAALLL. The Lumenal portion of the chain corresponds to 41-410; that stretch reads RAHPSVLSER…TLKELQEAEK (370 aa).

This sequence belongs to the DIPK family. Post-translationally, among the many cysteines in the lumenal domain, most are probably involved in disulfide bonds. Mainly expressed in the brain and eye, some expression in kidney and skeletal muscle.

The protein localises to the endoplasmic reticulum membrane. In Mus musculus (Mouse), this protein is Divergent protein kinase domain 1C (Dipk1c).